The sequence spans 152 residues: Neuromedin-S (152 aa).

The N-terminal stretch at 1–26 (MKHPFPQFPPILVIYCFCMLQIPSSG) is a signal peptide. 3 propeptides span residues 27 to 69 (ASPP…VYKR), 70 to 105 (FLFH…PSRR), and 106 to 108 (MKR). Asn144 bears the Asparagine amide mark. Positions 147–152 (YTDKVQ) are excised as a propeptide.

Belongs to the NmU family. Expressed in the CNS, spleen and testis. Specifically expressed in the suprachiasmatic nuclei (SCN) of the hypothalamus.

The protein resides in the secreted. Functionally, implicated in the regulation of circadian rhythms through autocrine and/or paracrine actions. Stimulates the contraction of rectum and elevation of blood pressure. The sequence is that of Neuromedin-S (Nms) from Rattus norvegicus (Rat).